Reading from the N-terminus, the 1054-residue chain is DNA-directed RNA polymerase subunit beta' (1054 aa).

3 residues coordinate Mg(2+): Asp383, Asp385, and Asp387. Zn(2+)-binding residues include Cys752, Cys826, Cys833, and Cys836.

The protein belongs to the RNA polymerase beta' chain family. In terms of assembly, the RNAP catalytic core consists of 2 alpha, 1 beta, 1 beta' and 1 omega subunit. When a sigma factor is associated with the core the holoenzyme is formed, which can initiate transcription. Requires Mg(2+) as cofactor. It depends on Zn(2+) as a cofactor.

It carries out the reaction RNA(n) + a ribonucleoside 5'-triphosphate = RNA(n+1) + diphosphate. Functionally, DNA-dependent RNA polymerase catalyzes the transcription of DNA into RNA using the four ribonucleoside triphosphates as substrates. The polypeptide is DNA-directed RNA polymerase subunit beta' (Weissella paramesenteroides (Leuconostoc paramesenteroides)).